A 45-amino-acid chain; its full sequence is Photosystem II reaction center protein K (45 aa).

The propeptide occupies 1 to 8; sequence MDVNFLLS. A helical transmembrane segment spans residues 20-40; the sequence is IVDVMPAIPVFFLLLAFVWQA.

This sequence belongs to the PsbK family. As to quaternary structure, PSII is composed of 1 copy each of membrane proteins PsbA, PsbB, PsbC, PsbD, PsbE, PsbF, PsbH, PsbI, PsbJ, PsbK, PsbL, PsbM, PsbT, PsbX, PsbY, PsbZ, Psb30/Ycf12, at least 3 peripheral proteins of the oxygen-evolving complex and a large number of cofactors. It forms dimeric complexes.

The protein localises to the plastid. Its subcellular location is the chloroplast thylakoid membrane. Its function is as follows. One of the components of the core complex of photosystem II (PSII). PSII is a light-driven water:plastoquinone oxidoreductase that uses light energy to abstract electrons from H(2)O, generating O(2) and a proton gradient subsequently used for ATP formation. It consists of a core antenna complex that captures photons, and an electron transfer chain that converts photonic excitation into a charge separation. In Emiliania huxleyi (Coccolithophore), this protein is Photosystem II reaction center protein K.